The sequence spans 706 residues: Polyribonucleotide nucleotidyltransferase (706 aa).

Mg(2+) contacts are provided by D488 and D494. Positions P555–I614 constitute a KH domain. Positions G624–K692 constitute an S1 motif domain.

It belongs to the polyribonucleotide nucleotidyltransferase family. The cofactor is Mg(2+).

It localises to the cytoplasm. The enzyme catalyses RNA(n+1) + phosphate = RNA(n) + a ribonucleoside 5'-diphosphate. Its function is as follows. Involved in mRNA degradation. Catalyzes the phosphorolysis of single-stranded polyribonucleotides processively in the 3'- to 5'-direction. This chain is Polyribonucleotide nucleotidyltransferase, found in Albidiferax ferrireducens (strain ATCC BAA-621 / DSM 15236 / T118) (Rhodoferax ferrireducens).